The sequence spans 67 residues: Large ribosomal subunit protein bL35 (67 aa).

It belongs to the bacterial ribosomal protein bL35 family.

This is Large ribosomal subunit protein bL35 from Methylorubrum extorquens (strain CM4 / NCIMB 13688) (Methylobacterium extorquens).